We begin with the raw amino-acid sequence, 549 residues long: uncharacterized protein (549 aa).

A run of 12 helical transmembrane segments spans residues 27-47, 108-128, 146-166, 197-217, 233-253, 265-285, 308-328, 352-372, 399-419, 434-454, 472-492, and 501-521; these read ILRF…YVFV, PIVV…GVIF, TGLV…LAIA, AVAI…IPML, FIAI…FLLV, VAAI…LISL, FLVI…LSIL, LVLL…IFGV, TLLV…VGLG, LMLA…VAIG, IVSL…FQAI, and IFIW…VLIG.

The protein localises to the cell membrane. This is an uncharacterized protein from Mycoplasma pneumoniae (strain ATCC 29342 / M129 / Subtype 1) (Mycoplasmoides pneumoniae).